The chain runs to 89 residues: uncharacterized protein (89 aa).

3 helical membrane passes run Thr5–Ala27, Leu32–Leu51, and Leu63–Ala85.

It localises to the cell membrane. This is an uncharacterized protein from Bacillus subtilis (strain 168).